We begin with the raw amino-acid sequence, 236 residues long: Phosphoribosylaminoimidazole-succinocarboxamide synthase (236 aa).

The protein belongs to the SAICAR synthetase family.

It catalyses the reaction 5-amino-1-(5-phospho-D-ribosyl)imidazole-4-carboxylate + L-aspartate + ATP = (2S)-2-[5-amino-1-(5-phospho-beta-D-ribosyl)imidazole-4-carboxamido]succinate + ADP + phosphate + 2 H(+). It participates in purine metabolism; IMP biosynthesis via de novo pathway; 5-amino-1-(5-phospho-D-ribosyl)imidazole-4-carboxamide from 5-amino-1-(5-phospho-D-ribosyl)imidazole-4-carboxylate: step 1/2. The chain is Phosphoribosylaminoimidazole-succinocarboxamide synthase from Coprothermobacter proteolyticus (strain ATCC 35245 / DSM 5265 / OCM 4 / BT).